We begin with the raw amino-acid sequence, 1715 residues long: MTSTASAQQPVLRTKTPSYHAPPSTDPLSGATIHTLRCLDTPIHLGYHLIPHIAKTLLSTLPSSTYVLITDQNLEARCSVTTAFRREFEKAAVHLSSSHSWRLLTKVIPPGEASKSRDGKNAIEDWMFEHRVTRDAVVLAVGGGVIGDLVGFVAATFMRGLKFVQIPTTLLAMVDSAVGGKTAIDHPLGKNLIGSFHQPNYVFIDAAWLKTLPVREFSNGMAEVVKTAAIWDPIDFAKLESSAPAIRSAVLGPFAKDAPLDQGRTLETRTESQSLLLDVIRGSVGVKAHIVTIDEKETGLRNLVNFGHTIGHAIEAVLTPEMLHGECISIGMILEAEVARYMHGLSQVAIGRLTRCLKEYDLPVSLSDSRVTRLAKSLDVTVDRLLDIMKVDKKNSGTNKKIVLLSSIGDTVQNMASTVSDHIIRRVLSLAATVTPIHEQPNKPKVTLSTPGSKSISNRALVLAALATNTCRLRNMLHSDDTQVMMAGLHDLQAARFEFEDGGETIVVHGNAGALARPANDKQIYLQNAGTAARFMATVVSLVHNDGNQHPVVITGNKRMKERPIAALVDALRSNGTSIDYLEGHGCLPLAVKGTTHGFKGGKIQLSATISSQYVSSILLCAPYAAEQVVLELVGGQVISQLYIDMTIAMMATFGIKVERLLDPTTGRPSNTYRIPKGHYVSPDVYDIESDASSATYPLAIAAITGTECTVPNIGSASLQGDARFAKEVLEPMGCTVVQTATSTTVIGPKLGQLRQIGLVDMEPMTDAFLTASVLLAVAAHSPANGSTSNARPSTRITGIANQRVKECNRIRAMMDELAKFGVNTKEHDDGLEIFGIDYRQLHANVRVHCYDDHRVAMAFSVLASLAPGAILEEKRCVEKTWPNWWDDLERKLGIRVHGVDPECSPSLCISPSHFTKASAASTNGKPPTCLSQLTCGKALTPRKYSKHATIICIGMRASGKTFLGAIGAAALSRTFIDADVVFNEKLGAKDGLGDFVREHGWPAFRQKELEILQELIARHPSGALISLGGGVVETEACRQILAEYAQTKGPVIYIVRDTNAIVKFLATSDRPAYGEPVMDVYRRRNPWFSECSSAELVSYSEGESLAIQPCAMNVPDPSFTIQKKFGLETEVARFFKFVVGQDTNQIRDLVVDSRKGGRRTYFLSLTFPDVVPKLELIRSMESGSDALEFRADLLNPSGQPVTTPQIPPTEYVKNQLAALRHRTSLPIVFTVRTHSQGGMFPDGKQHEYFELISLALRHACEYIDLELGWDDDLLSAVVQAKGNSQIIASWHDWSGRLDWESESTAKIYEKACRFGDIAKIIGKATTMEDNYSLERFRAKVSATATKPLLAVNMGSVGQLSRIVNPVFTPITHEAMPFKAAPGQLSFRQVQTALSLIGQADARRFALFGSPIGHSLSPLLHNTGFAALGLPHQYELLESTEINDAVAAFVRSPDFGGASVTIPHKLNIIKLLDEVTDEAKTIGAVNTIIPIRDAQGVVTSLVGDNTDWIAIETLARRSLRTVHLADPNLTGLVIGAGGSARAALFALYRLGVKRILLFNRTLANAEKLAREVPPEWNVSVLTSLDEVAQLSADQSPSVVVSNIPAEGSTLDASSRGLIHLPTCMLRNPAGGVVIDMSYKPHYTSLLQLAQQVNTNHELAIGTNATKAPTRKLWAAVPGITILLEQGCHQFHRWTGREAPRAQIEAAAWDVYLQRC.

Over residues Met1–Pro17 the composition is skewed to polar residues. The disordered stretch occupies residues Met1 to Asp26. A 3-dehydroquinate synthase region spans residues Met1–Asp421. NAD(+)-binding positions include Asp71–Asn73, Glu112–Lys115, Gly143–Val145, and Asp148. Residue Arg159 participates in 7-phospho-2-dehydro-3-deoxy-D-arabino-heptonate binding. Position 168–169 (Thr168–Thr169) interacts with NAD(+). 7-phospho-2-dehydro-3-deoxy-D-arabino-heptonate is bound by residues Asp175 and Lys181. Lys190 provides a ligand contact to NAD(+). A 7-phospho-2-dehydro-3-deoxy-D-arabino-heptonate-binding site is contributed by Asn191. NAD(+)-binding positions include Trp208–Thr211 and Asn219. Position 223 (Glu223) interacts with Zn(2+). 7-phospho-2-dehydro-3-deoxy-D-arabino-heptonate is bound by residues Glu223–Lys226 and Lys287. The Proton acceptor; for 3-dehydroquinate synthase activity role is filled by Glu297. 7-phospho-2-dehydro-3-deoxy-D-arabino-heptonate is bound by residues Arg301–Asn305 and His308. His308 contributes to the Zn(2+) binding site. Residue His312 is the Proton acceptor; for 3-dehydroquinate synthase activity of the active site. 2 residues coordinate 7-phospho-2-dehydro-3-deoxy-D-arabino-heptonate: His324 and Lys393. His324 lines the Zn(2+) pocket. Residues Val434–Ile895 form an EPSP synthase region. The active-site For EPSP synthase activity is the Cys877. Positions His948–Ser1165 are shikimate kinase. Residue Gly955–Thr962 coordinates ATP. Residues Leu1166–Gln1389 form a 3-dehydroquinase region. His1292 functions as the Proton acceptor; for 3-dehydroquinate dehydratase activity in the catalytic mechanism. Catalysis depends on Lys1320, which acts as the Schiff-base intermediate with substrate; for 3-dehydroquinate dehydratase activity. Residues Ala1402 to Cys1715 form a shikimate dehydrogenase region.

This sequence in the N-terminal section; belongs to the sugar phosphate cyclases superfamily. Dehydroquinate synthase family. It in the 2nd section; belongs to the EPSP synthase family. The protein in the 3rd section; belongs to the shikimate kinase family. In the 4th section; belongs to the type-I 3-dehydroquinase family. This sequence in the C-terminal section; belongs to the shikimate dehydrogenase family. As to quaternary structure, homodimer. Zn(2+) serves as cofactor.

The protein resides in the cytoplasm. The catalysed reaction is 7-phospho-2-dehydro-3-deoxy-D-arabino-heptonate = 3-dehydroquinate + phosphate. It carries out the reaction 3-dehydroquinate = 3-dehydroshikimate + H2O. It catalyses the reaction shikimate + NADP(+) = 3-dehydroshikimate + NADPH + H(+). The enzyme catalyses shikimate + ATP = 3-phosphoshikimate + ADP + H(+). The catalysed reaction is 3-phosphoshikimate + phosphoenolpyruvate = 5-O-(1-carboxyvinyl)-3-phosphoshikimate + phosphate. It participates in metabolic intermediate biosynthesis; chorismate biosynthesis; chorismate from D-erythrose 4-phosphate and phosphoenolpyruvate: step 2/7. It functions in the pathway metabolic intermediate biosynthesis; chorismate biosynthesis; chorismate from D-erythrose 4-phosphate and phosphoenolpyruvate: step 3/7. Its pathway is metabolic intermediate biosynthesis; chorismate biosynthesis; chorismate from D-erythrose 4-phosphate and phosphoenolpyruvate: step 4/7. The protein operates within metabolic intermediate biosynthesis; chorismate biosynthesis; chorismate from D-erythrose 4-phosphate and phosphoenolpyruvate: step 5/7. It participates in metabolic intermediate biosynthesis; chorismate biosynthesis; chorismate from D-erythrose 4-phosphate and phosphoenolpyruvate: step 6/7. The AROM polypeptide catalyzes 5 consecutive enzymatic reactions in prechorismate polyaromatic amino acid biosynthesis. In Mycosarcoma maydis (Corn smut fungus), this protein is Pentafunctional AROM polypeptide.